The primary structure comprises 310 residues: Ribosomal RNA small subunit methyltransferase H (310 aa).

Residues 32 to 34, aspartate 51, phenylalanine 78, aspartate 99, and glutamine 106 contribute to the S-adenosyl-L-methionine site; that span reads AGH. The tract at residues 290–310 is disordered; it reads GELEDNRRSRSAKLRVAEKQK.

The protein belongs to the methyltransferase superfamily. RsmH family.

The protein localises to the cytoplasm. It carries out the reaction cytidine(1402) in 16S rRNA + S-adenosyl-L-methionine = N(4)-methylcytidine(1402) in 16S rRNA + S-adenosyl-L-homocysteine + H(+). Specifically methylates the N4 position of cytidine in position 1402 (C1402) of 16S rRNA. This Exiguobacterium sp. (strain ATCC BAA-1283 / AT1b) protein is Ribosomal RNA small subunit methyltransferase H.